The chain runs to 194 residues: Fibroblast growth factor 7 (194 aa).

The first 31 residues, methionine 1 to alanine 31, serve as a signal peptide directing secretion. Asparagine 45 carries an N-linked (GlcNAc...) asparagine glycan.

It belongs to the heparin-binding growth factors family. In terms of assembly, interacts with FGFBP1. Interacts with FGFR2. Affinity between fibroblast growth factors (FGFs) and their receptors is increased by heparan sulfate glycosaminoglycans that function as coreceptors. In terms of tissue distribution, epithelial cell.

It is found in the secreted. Functionally, plays an important role in the regulation of embryonic development, cell proliferation and cell differentiation. Required for normal branching morphogenesis. Growth factor active on keratinocytes. Possible major paracrine effector of normal epithelial cell proliferation. This chain is Fibroblast growth factor 7 (FGF7), found in Homo sapiens (Human).